Reading from the N-terminus, the 402-residue chain is Multidrug resistance protein MdtH (402 aa).

The Cytoplasmic segment spans residues methionine 1–lysine 12. The chain crosses the membrane as a helical span at residues tyrosine 13–isoleucine 33. Residues serine 34–glutamate 98 are Periplasmic-facing. Residues proline 99 to phenylalanine 116 traverse the membrane as a helical segment. Over aspartate 117–serine 138 the chain is Cytoplasmic. Residues leucine 139 to leucine 159 form a helical membrane-spanning segment. Topologically, residues glutamine 160–arginine 164 are periplasmic. Residues leucine 165–leucine 185 traverse the membrane as a helical segment. At proline 186 to tyrosine 213 the chain is on the cytoplasmic side. Residues valine 214–methionine 234 traverse the membrane as a helical segment. Residues valine 235 to alanine 243 are Periplasmic-facing. The chain crosses the membrane as a helical span at residues alanine 244–alanine 264. Topologically, residues arginine 265–arginine 276 are cytoplasmic. The chain crosses the membrane as a helical span at residues leucine 277–leucine 297. Residues glutamine 298 to glutamine 299 lie on the Periplasmic side of the membrane. The chain crosses the membrane as a helical span at residues leucine 300 to threonine 320. The Cytoplasmic portion of the chain corresponds to leucine 321–arginine 339. The chain crosses the membrane as a helical span at residues leucine 340–glycine 360. Over lysine 361 to glutamate 367 the chain is Periplasmic. Residues leucine 368–phenylalanine 388 traverse the membrane as a helical segment. The Cytoplasmic segment spans residues serine 389 to alanine 402.

This sequence belongs to the major facilitator superfamily. DHA1 family. MdtH (TC 2.A.1.2.21) subfamily.

The protein resides in the cell inner membrane. The polypeptide is Multidrug resistance protein MdtH (Salmonella typhimurium (strain LT2 / SGSC1412 / ATCC 700720)).